A 530-amino-acid polypeptide reads, in one-letter code: uncharacterized protein (530 aa).

The tract at residues 1–33 (MNNMSLKFPDIAINSSESSDDEDPSSKNEKKDG) is disordered. The span at 24–33 (PSSKNEKKDG) shows a compositional bias: basic and acidic residues. The next 12 helical transmembrane spans lie at 83-103 (FFIL…KTAV), 124-144 (WLST…GYLL), 147-167 (FPIS…VLLM), 181-201 (FFSG…TAMW), 211-231 (VVSW…LGYG), 244-264 (YPFL…LFFP), 323-343 (VTNA…YSGI), 346-366 (TLLT…SGIF), 375-395 (IPLA…IWKI), 404-424 (VVGV…LSLL), 436-456 (TVNA…PQLF), and 471-491 (SLVS…YYIF).

It belongs to the major facilitator superfamily. Allantoate permease family.

Its subcellular location is the endoplasmic reticulum. It localises to the membrane. This is an uncharacterized protein from Schizosaccharomyces pombe (strain 972 / ATCC 24843) (Fission yeast).